The sequence spans 205 residues: Large ribosomal subunit protein bL25 (205 aa).

The tract at residues 178–205 is disordered; the sequence is FPETEPVEDEESAGEDAQGESEEKAAKE. Residues 182–197 show a composition bias toward acidic residues; sequence EPVEDEESAGEDAQGE.

Belongs to the bacterial ribosomal protein bL25 family. CTC subfamily. In terms of assembly, part of the 50S ribosomal subunit; part of the 5S rRNA/L5/L18/L25 subcomplex. Contacts the 5S rRNA. Binds to the 5S rRNA independently of L5 and L18.

Its function is as follows. This is one of the proteins that binds to the 5S RNA in the ribosome where it forms part of the central protuberance. In Cutibacterium acnes (strain DSM 16379 / KPA171202) (Propionibacterium acnes), this protein is Large ribosomal subunit protein bL25.